The following is a 427-amino-acid chain: Tol-Pal system protein TolB (427 aa).

The first 25 residues, 1–25 (MKTFAQLRLLLAAAALALLSFSAQA), serve as a signal peptide directing secretion.

It belongs to the TolB family. In terms of assembly, the Tol-Pal system is composed of five core proteins: the inner membrane proteins TolA, TolQ and TolR, the periplasmic protein TolB and the outer membrane protein Pal. They form a network linking the inner and outer membranes and the peptidoglycan layer.

It localises to the periplasm. Functionally, part of the Tol-Pal system, which plays a role in outer membrane invagination during cell division and is important for maintaining outer membrane integrity. The protein is Tol-Pal system protein TolB of Azoarcus sp. (strain BH72).